The primary structure comprises 60 residues: Large ribosomal subunit protein bL32 (60 aa).

The span at 1-19 (MGVPKRKTSKGRRDKRRAH) shows a compositional bias: basic residues. The disordered stretch occupies residues 1–20 (MGVPKRKTSKGRRDKRRAHL).

This sequence belongs to the bacterial ribosomal protein bL32 family.

The polypeptide is Large ribosomal subunit protein bL32 (Syntrophobacter fumaroxidans (strain DSM 10017 / MPOB)).